The primary structure comprises 97 residues: MSIRPLHDRVIVKRKEVESKSAGGIVLTGSAAGKSTRGEVVAVGKGRVLENGNVQPLDVKVGDIVIFNDGYGVKAEKIDNEEVLIMSESDILAIVEA.

Belongs to the GroES chaperonin family. Heptamer of 7 subunits arranged in a ring. Interacts with the chaperonin GroEL.

Its subcellular location is the cytoplasm. Functionally, together with the chaperonin GroEL, plays an essential role in assisting protein folding. The GroEL-GroES system forms a nano-cage that allows encapsulation of the non-native substrate proteins and provides a physical environment optimized to promote and accelerate protein folding. GroES binds to the apical surface of the GroEL ring, thereby capping the opening of the GroEL channel. The protein is Co-chaperonin GroES of Serratia proteamaculans (strain 568).